An 89-amino-acid chain; its full sequence is Defensin-like protein 108 (89 aa).

Residues 1–20 (MTSLIAFLFTVLVIVSSVHC) form the signal peptide. Intrachain disulfides connect Cys-39–Cys-81, Cys-49–Cys-71, Cys-57–Cys-79, and Cys-61–Cys-80.

Belongs to the DEFL family.

Its subcellular location is the secreted. This Arabidopsis thaliana (Mouse-ear cress) protein is Defensin-like protein 108 (LCR51).